A 173-amino-acid polypeptide reads, in one-letter code: Protein SHI RELATED SEQUENCE 8 (173 aa).

Residues C52, C63, C68, C72, and C79 each contribute to the Zn(2+) site. Residues 52–79 constitute a DNA-binding region (zn(2)-C6 fungal-type; degenerate); it reads CQDFGNQAKKDCSHMRCRTCCKSRGFEC. The segment covering 100-110 has biased composition (low complexity); the sequence is LATVQPQTQLP. Positions 100–121 are disordered; it reads LATVQPQTQLPRGESVPKRHRE.

The protein belongs to the SHI protein family.

The protein resides in the nucleus. Transcription activator that binds DNA on 5'-ACTCTAC-3' and promotes auxin homeostasis-regulating gene expression (e.g. YUC genes), as well as genes affecting stamen development, cell expansion and timing of flowering. Synergistically with other SHI-related proteins, regulates gynoecium, stamen and leaf development in a dose-dependent manner, controlling apical-basal patterning. Promotes style and stigma formation, and influence vascular development during gynoecium development. May also have a role in the formation and/or maintenance of the shoot apical meristem (SAM). This chain is Protein SHI RELATED SEQUENCE 8 (SRS8), found in Arabidopsis thaliana (Mouse-ear cress).